A 427-amino-acid polypeptide reads, in one-letter code: 3-phosphoshikimate 1-carboxyvinyltransferase (427 aa).

Lysine 22, serine 23, and arginine 27 together coordinate 3-phosphoshikimate. A phosphoenolpyruvate-binding site is contributed by lysine 22. Positions 96 and 124 each coordinate phosphoenolpyruvate. 3-phosphoshikimate contacts are provided by serine 169, serine 170, glutamine 171, serine 197, aspartate 313, asparagine 336, and lysine 340. Position 171 (glutamine 171) interacts with phosphoenolpyruvate. Aspartate 313 (proton acceptor) is an active-site residue. Residues arginine 344, arginine 386, and lysine 411 each contribute to the phosphoenolpyruvate site.

This sequence belongs to the EPSP synthase family. As to quaternary structure, monomer.

Its subcellular location is the cytoplasm. It catalyses the reaction 3-phosphoshikimate + phosphoenolpyruvate = 5-O-(1-carboxyvinyl)-3-phosphoshikimate + phosphate. It functions in the pathway metabolic intermediate biosynthesis; chorismate biosynthesis; chorismate from D-erythrose 4-phosphate and phosphoenolpyruvate: step 6/7. Catalyzes the transfer of the enolpyruvyl moiety of phosphoenolpyruvate (PEP) to the 5-hydroxyl of shikimate-3-phosphate (S3P) to produce enolpyruvyl shikimate-3-phosphate and inorganic phosphate. The protein is 3-phosphoshikimate 1-carboxyvinyltransferase of Klebsiella pneumoniae (strain 342).